The primary structure comprises 331 residues: Ketol-acid reductoisomerase (NADP(+)) (331 aa).

The 181-residue stretch at 2–182 (AQLFYDSDAD…GGTRAGILET (181 aa)) folds into the KARI N-terminal Rossmann domain. Residues 25–28 (YGSQ), S51, S53, and 83–86 (DEFQ) contribute to the NADP(+) site. Residue H108 is part of the active site. An NADP(+)-binding site is contributed by G134. Residues 183–328 (NFKEETETDL…KGLRAMFSWL (146 aa)) enclose the KARI C-terminal knotted domain. Mg(2+)-binding residues include D191, E195, E227, and E231. S252 contributes to the substrate binding site.

Belongs to the ketol-acid reductoisomerase family. Requires Mg(2+) as cofactor.

It carries out the reaction (2R)-2,3-dihydroxy-3-methylbutanoate + NADP(+) = (2S)-2-acetolactate + NADPH + H(+). It catalyses the reaction (2R,3R)-2,3-dihydroxy-3-methylpentanoate + NADP(+) = (S)-2-ethyl-2-hydroxy-3-oxobutanoate + NADPH + H(+). It participates in amino-acid biosynthesis; L-isoleucine biosynthesis; L-isoleucine from 2-oxobutanoate: step 2/4. It functions in the pathway amino-acid biosynthesis; L-valine biosynthesis; L-valine from pyruvate: step 2/4. Involved in the biosynthesis of branched-chain amino acids (BCAA). Catalyzes an alkyl-migration followed by a ketol-acid reduction of (S)-2-acetolactate (S2AL) to yield (R)-2,3-dihydroxy-isovalerate. In the isomerase reaction, S2AL is rearranged via a Mg-dependent methyl migration to produce 3-hydroxy-3-methyl-2-ketobutyrate (HMKB). In the reductase reaction, this 2-ketoacid undergoes a metal-dependent reduction by NADPH to yield (R)-2,3-dihydroxy-isovalerate. In Prochlorococcus marinus (strain MIT 9313), this protein is Ketol-acid reductoisomerase (NADP(+)).